Consider the following 726-residue polypeptide: uncharacterized protein (726 aa).

Active-site charge relay system residues include serine 583 and histidine 698.

It belongs to the peptidase S9B family.

This is an uncharacterized protein from Sinorhizobium fredii (strain NBRC 101917 / NGR234).